Consider the following 266-residue polypeptide: Probable metal transport system membrane protein TP_0036 (266 aa).

Helical transmembrane passes span 10–30 (AFVA…HLVL), 34–54 (ALMG…AVSC), 56–76 (IHPG…IEFL), 88–108 (LSIV…SGLI), 120–140 (ILVV…FCVG), 172–192 (VASV…GILV), 211–231 (FLLT…LGLV), and 238–258 (VAPG…VIAL).

The protein belongs to the ABC-3 integral membrane protein family.

The protein localises to the cell inner membrane. Functionally, part of an ATP-driven transport system TP_0034/TP_0035/TP_0036 for a metal. This is Probable metal transport system membrane protein TP_0036 from Treponema pallidum (strain Nichols).